The following is a 209-amino-acid chain: MFHKELLKLYFICGTTTCQGKNLYTVVEEALKGGITLFQFREKGEGALEGLEKLELAIQIKELCKKYNVPFIVNDDIDLAMEIDADGVHVGQDDIGVDEIRKLMPDKIIGLSIRNEEEFQQSKVEYVDYVGVGPVFGTQSKDDAGGTIGYEGLELMRKLLPQMPLVAIGGIQTKHIKDIIKTNMDGVSIISAISYAKNIEKTVREMSEQ.

Residues Q39–K43 and N74 contribute to the 4-amino-2-methyl-5-(diphosphooxymethyl)pyrimidine site. Mg(2+) is bound by residues D75 and D94. A 4-amino-2-methyl-5-(diphosphooxymethyl)pyrimidine-binding site is contributed by S112. 2-[(2R,5Z)-2-carboxy-4-methylthiazol-5(2H)-ylidene]ethyl phosphate is bound at residue T138 to S140. K141 serves as a coordination point for 4-amino-2-methyl-5-(diphosphooxymethyl)pyrimidine. 2-[(2R,5Z)-2-carboxy-4-methylthiazol-5(2H)-ylidene]ethyl phosphate is bound by residues G170 and I190 to S191.

The protein belongs to the thiamine-phosphate synthase family. It depends on Mg(2+) as a cofactor.

The catalysed reaction is 2-[(2R,5Z)-2-carboxy-4-methylthiazol-5(2H)-ylidene]ethyl phosphate + 4-amino-2-methyl-5-(diphosphooxymethyl)pyrimidine + 2 H(+) = thiamine phosphate + CO2 + diphosphate. It carries out the reaction 2-(2-carboxy-4-methylthiazol-5-yl)ethyl phosphate + 4-amino-2-methyl-5-(diphosphooxymethyl)pyrimidine + 2 H(+) = thiamine phosphate + CO2 + diphosphate. The enzyme catalyses 4-methyl-5-(2-phosphooxyethyl)-thiazole + 4-amino-2-methyl-5-(diphosphooxymethyl)pyrimidine + H(+) = thiamine phosphate + diphosphate. The protein operates within cofactor biosynthesis; thiamine diphosphate biosynthesis; thiamine phosphate from 4-amino-2-methyl-5-diphosphomethylpyrimidine and 4-methyl-5-(2-phosphoethyl)-thiazole: step 1/1. Its function is as follows. Condenses 4-methyl-5-(beta-hydroxyethyl)thiazole monophosphate (THZ-P) and 2-methyl-4-amino-5-hydroxymethyl pyrimidine pyrophosphate (HMP-PP) to form thiamine monophosphate (TMP). This Streptococcus pneumoniae serotype 4 (strain ATCC BAA-334 / TIGR4) protein is Thiamine-phosphate synthase 1.